A 307-amino-acid polypeptide reads, in one-letter code: UDP-N-acetylenolpyruvoylglucosamine reductase (307 aa).

In terms of domain architecture, FAD-binding PCMH-type spans 33–198 (KVGGPVDILV…LEAILKLSLG (166 aa)). The active site involves R177. S227 (proton donor) is an active-site residue. E297 is a catalytic residue.

The protein belongs to the MurB family. FAD is required as a cofactor.

Its subcellular location is the cytoplasm. It carries out the reaction UDP-N-acetyl-alpha-D-muramate + NADP(+) = UDP-N-acetyl-3-O-(1-carboxyvinyl)-alpha-D-glucosamine + NADPH + H(+). Its pathway is cell wall biogenesis; peptidoglycan biosynthesis. In terms of biological role, cell wall formation. The polypeptide is UDP-N-acetylenolpyruvoylglucosamine reductase (Clostridium tetani (strain Massachusetts / E88)).